We begin with the raw amino-acid sequence, 227 residues long: Ribonuclease 3 (227 aa).

Positions 6–128 constitute an RNase III domain; sequence ASDYQQRIGY…VIAAIYLDAD (123 aa). Residue Glu41 participates in Mg(2+) binding. Residue Asp45 is part of the active site. Residues Asp114 and Glu117 each contribute to the Mg(2+) site. Glu117 is an active-site residue. Positions 155–225 constitute a DRBM domain; the sequence is DPKTRLQEWL…ASHAINQLDS (71 aa). The segment covering 203–212 has biased composition (basic and acidic residues); that stretch reads GEGSSRRLAE. Positions 203–227 are disordered; the sequence is GEGSSRRLAEQDAASHAINQLDSNK.

It belongs to the ribonuclease III family. As to quaternary structure, homodimer. The cofactor is Mg(2+).

Its subcellular location is the cytoplasm. The catalysed reaction is Endonucleolytic cleavage to 5'-phosphomonoester.. Digests double-stranded RNA. Involved in the processing of primary rRNA transcript to yield the immediate precursors to the large and small rRNAs (23S and 16S). Processes some mRNAs, and tRNAs when they are encoded in the rRNA operon. Processes pre-crRNA and tracrRNA of type II CRISPR loci if present in the organism. The polypeptide is Ribonuclease 3 (Xylella fastidiosa (strain M12)).